Here is a 994-residue protein sequence, read N- to C-terminus: Receptor-like protein 6 (994 aa).

Positions 1-25 (MTGLYSSMSFFLRTIVLLFSTSSFC) are cleaved as a signal peptide. The Extracellular segment spans residues 26 to 946 (NTFASLTQDS…SSSSSSEEDE (921 aa)). Asn116, Asn134, and Asn154 each carry an N-linked (GlcNAc...) asparagine glycan. LRR repeat units follow at residues 122–146 (LQHL…EFSK), 148–171 (MRLE…LLQL), 174–199 (LVSL…LFLH), 205–228 (FMNL…EFSY), 230–253 (WSLR…VLLI), 254–278 (PNLE…LRNN), 280–301 (LLKL…ISNL), 302–325 (KHLT…LRSL), 326–349 (SHLS…VSNL), 350–373 (KQLT…LLNL), 375–397 (QLRY…ISQL), 398–421 (SNLE…LFNI), 423–445 (SLTT…NISL), 446–471 (LHNL…VFLS), 477–497 (SLAL…SEFS), 498–520 (SHLE…IRNQ), 521–544 (RNLS…LWRL), 546–569 (ELST…ALSG), and 571–595 (KIVM…GIQY). N-linked (GlcNAc...) asparagine glycosylation is found at Asn277 and Asn287. Residues Asn420, Asn435, and Asn442 are each glycosylated (N-linked (GlcNAc...) asparagine). The N-linked (GlcNAc...) asparagine glycan is linked to Asn489. N-linked (GlcNAc...) asparagine glycosylation is found at Asn522, Asn554, and Asn561. The stretch at 597 to 613 (LGSYNNFTGYIPPSICG) is one LRR 20; degenerate repeat. Asn602 carries an N-linked (GlcNAc...) asparagine glycan. LRR repeat units follow at residues 614-637 (LANP…CLEA), 639-663 (MSSL…FMNA), 665-687 (VLSS…LAGC), 689-710 (ALEI…WLNS), 711-737 (LPKL…VWFG), 739-762 (PLLR…YFMN), 803-827 (LTKY…VGIL), 828-851 (KELH…LANL), 852-875 (TNLE…LGTL), and 877-900 (SLEW…QFHR). Asn649 carries N-linked (GlcNAc...) asparagine glycosylation. Residue Asn701 is glycosylated (N-linked (GlcNAc...) asparagine). N-linked (GlcNAc...) asparagine glycosylation occurs at Asn762. Asn834 and Asn850 each carry an N-linked (GlcNAc...) asparagine glycan. N-linked (GlcNAc...) asparagine glycans are attached at residues Asn882 and Asn902. Residues 947–967 (LISWIAACLGFAPGMVFGLTM) form a helical membrane-spanning segment. Topologically, residues 968-994 (GYIMTSHKHEWFMDTFGRRKGRSTRTR) are cytoplasmic.

Belongs to the RLP family.

It is found in the cell membrane. This is Receptor-like protein 6 from Arabidopsis thaliana (Mouse-ear cress).